The chain runs to 164 residues: Putative 4-hydroxy-4-methyl-2-oxoglutarate aldolase (164 aa).

Substrate-binding positions include 75–78 (GDML) and R97. A divalent metal cation is bound at residue D98.

The protein belongs to the class II aldolase/RraA-like family. Homotrimer. Requires a divalent metal cation as cofactor.

The catalysed reaction is 4-hydroxy-4-methyl-2-oxoglutarate = 2 pyruvate. It catalyses the reaction oxaloacetate + H(+) = pyruvate + CO2. Its function is as follows. Catalyzes the aldol cleavage of 4-hydroxy-4-methyl-2-oxoglutarate (HMG) into 2 molecules of pyruvate. Also contains a secondary oxaloacetate (OAA) decarboxylase activity due to the common pyruvate enolate transition state formed following C-C bond cleavage in the retro-aldol and decarboxylation reactions. The sequence is that of Putative 4-hydroxy-4-methyl-2-oxoglutarate aldolase from Hahella chejuensis (strain KCTC 2396).